Consider the following 189-residue polypeptide: Dihydrofolate reductase (189 aa).

One can recognise a DHFR domain in the interval 3–184 (SLNSIVAVCQ…IQYKFEVYQK (182 aa)). NADP(+) contacts are provided by residues Ala-9 and 15 to 21 (GIGKDGN). Substrate is bound at residue 30–35 (EYKYFQ). 54–56 (KKT) provides a ligand contact to NADP(+). Residues Asn-64 and Arg-70 each contribute to the substrate site. NADP(+) is bound by residues 76–78 (SRE) and 116–123 (GGTAVYKA).

It belongs to the dihydrofolate reductase family.

It carries out the reaction (6S)-5,6,7,8-tetrahydrofolate + NADP(+) = 7,8-dihydrofolate + NADPH + H(+). It participates in cofactor biosynthesis; tetrahydrofolate biosynthesis; 5,6,7,8-tetrahydrofolate from 7,8-dihydrofolate: step 1/1. Key enzyme in folate metabolism. Contributes to the de novo mitochondrial thymidylate biosynthesis pathway. Catalyzes an essential reaction for de novo glycine and purine synthesis, and for DNA precursor synthesis. May bind to mRNA. The polypeptide is Dihydrofolate reductase (DHFR) (Gallus gallus (Chicken)).